Consider the following 513-residue polypeptide: Histidine ammonia-lyase (513 aa).

A cross-link (5-imidazolinone (Ala-Gly)) is located at residues 143–145 (ASG). Ser144 carries the 2,3-didehydroalanine (Ser) modification.

This sequence belongs to the PAL/histidase family. In terms of processing, contains an active site 4-methylidene-imidazol-5-one (MIO), which is formed autocatalytically by cyclization and dehydration of residues Ala-Ser-Gly.

It is found in the cytoplasm. The catalysed reaction is L-histidine = trans-urocanate + NH4(+). It participates in amino-acid degradation; L-histidine degradation into L-glutamate; N-formimidoyl-L-glutamate from L-histidine: step 1/3. This is Histidine ammonia-lyase from Paracoccus denitrificans (strain Pd 1222).